A 186-amino-acid polypeptide reads, in one-letter code: Chromophore lyase CpcS/CpeS 1 (186 aa).

This sequence belongs to the CpcS/CpeS biliprotein lyase family.

Its function is as follows. Covalently attaches a chromophore to Cys residue(s) of phycobiliproteins. The chain is Chromophore lyase CpcS/CpeS 1 from Synechocystis sp. (strain ATCC 27184 / PCC 6803 / Kazusa).